The chain runs to 894 residues: Translation initiation factor IF-2 (894 aa).

Positions 25–304 (ADAGMNKASS…KPTSMQHGFD (280 aa)) are disordered. Basic and acidic residues-rich tracts occupy residues 33–44 (SSDHVSDEEKQK), 52–62 (EHGDKSGESEP), 101–174 (STIE…KEMN), 184–239 (AKKE…ENSD), and 247–263 (YARE…EGGA). Positions 283 to 293 (RGGKGRNKGKL) are enriched in basic residues. Positions 393 to 562 (PRAPVVTIMG…LLQSEVLELT (170 aa)) constitute a tr-type G domain. A G1 region spans residues 402–409 (GHVDHGKT). Position 402 to 409 (402 to 409 (GHVDHGKT)) interacts with GTP. The segment at 427-431 (GITQH) is G2. The tract at residues 448 to 451 (DTPG) is G3. GTP contacts are provided by residues 448-452 (DTPGH) and 502-505 (NKID). Positions 502–505 (NKID) are G4. Positions 538-540 (SAK) are G5.

This sequence belongs to the TRAFAC class translation factor GTPase superfamily. Classic translation factor GTPase family. IF-2 subfamily.

It localises to the cytoplasm. Functionally, one of the essential components for the initiation of protein synthesis. Protects formylmethionyl-tRNA from spontaneous hydrolysis and promotes its binding to the 30S ribosomal subunits. Also involved in the hydrolysis of GTP during the formation of the 70S ribosomal complex. This Vibrio campbellii (strain ATCC BAA-1116) protein is Translation initiation factor IF-2.